The chain runs to 206 residues: Ras-related protein Rab-18 (206 aa).

Met1 carries the post-translational modification N-acetylmethionine. GTP contacts are provided by Ser17, Gly20, Lys21, Ser22, Ser23, Asp34, Pro35, Thr40, Gly66, Lys123, and Asp125. Mg(2+) is bound at residue Ser22. 2 consecutive short sequence motifs (switch) follow at residues Asp31–Phe45 and Asp63–Gly80. A Mg(2+)-binding site is contributed by Thr40. Ser144 is subject to Phosphoserine. Ala152 serves as a coordination point for GTP. Cys199 carries the S-palmitoyl cysteine lipid modification. Cysteine methyl ester is present on Cys203. Cys203 carries S-geranylgeranyl cysteine lipidation. Residues Ser204–Leu206 constitute a propeptide, removed in mature form.

Belongs to the small GTPase superfamily. Rab family. In terms of assembly, interacts (in GTP-bound form) with ZFYVE1. Interacts with ZW10 and this interaction is enhanced in the presence of ZFYVE1. Interacts with BSCL2. Requires Mg(2+) as cofactor.

It localises to the endoplasmic reticulum membrane. It is found in the golgi apparatus. The protein localises to the cis-Golgi network membrane. Its subcellular location is the lipid droplet. The protein resides in the apical cell membrane. The catalysed reaction is GTP + H2O = GDP + phosphate + H(+). Its activity is regulated as follows. Regulated by guanine nucleotide exchange factors (GEFs) which promote the exchange of bound GDP for free GTP. Regulated by GTPase activating proteins (GAPs) which increase the GTP hydrolysis activity at the ER membrane. Inhibited by GDP dissociation inhibitors (GDIs) which prevent Rab-GDP dissociation. In terms of biological role, the small GTPases Rab are key regulators of intracellular membrane trafficking, from the formation of transport vesicles to their fusion with membranes. Rabs cycle between an inactive GDP-bound form and an active GTP-bound form that is able to recruit to membranes different sets of downstream effectors directly responsible for vesicle formation, movement, tethering and fusion. RAB18 is required for the localization of ZFYVE1 to lipid droplets and for its function in mediating the formation of endoplasmic reticulum-lipid droplets (ER-LD) contacts. Also required for maintaining endoplasmic reticulum structure. Plays a role in apical endocytosis/recycling. Plays a key role in eye and brain development and neurodegeneration. The chain is Ras-related protein Rab-18 from Rattus norvegicus (Rat).